The following is a 405-amino-acid chain: Coiled-coil domain-containing protein 91 (405 aa).

The GGA1-binding motif stretch occupies residues 1–16 (MDDDDFGGFEAAETFD). The segment at 1–27 (MDDDDFGGFEAAETFDGGNGETQTTSP) is disordered. Phosphoserine occurs at positions 43 and 46. Positions 126–376 (GANVSNIQLR…QKRLDQVIRQ (251 aa)) form a coiled coil. Positions 210–377 (LSIIVDEYKH…KRLDQVIRQR (168 aa)) are homodimerization.

Homodimer. Interacts with GGA1, GGA2 and AP1G1.

Its subcellular location is the membrane. The protein localises to the golgi apparatus. It localises to the trans-Golgi network membrane. The protein resides in the trans-Golgi network. Functionally, involved in the regulation of membrane traffic through the trans-Golgi network (TGN). Functions in close cooperation with the GGAs in the sorting of hydrolases to lysosomes. The polypeptide is Coiled-coil domain-containing protein 91 (CCDC91) (Pongo abelii (Sumatran orangutan)).